Consider the following 340-residue polypeptide: DnaJ homolog subfamily C member 22 (340 aa).

A TM2 domain is found at 1–50 (MGKSLLAAYGLWALGGPLGLYHIYLGRDSHALLWMLTLGGFGMGWMWDFW). The next 7 helical transmembrane spans lie at 5-25 (LLAA…HIYL), 30-50 (HALL…WDFW), 81-101 (FIGQ…GLSF), 105-125 (FHMV…ATVG), 135-155 (LIAA…MIPI), 186-206 (IGLV…LNTS), and 212-232 (VAGS…ISAL). One can recognise a J domain in the interval 278 to 340 (MACKVLGVNF…LMRLRKSKTL (63 aa)).

It localises to the membrane. Its function is as follows. May function as a co-chaperone. The protein is DnaJ homolog subfamily C member 22 (dnajc22) of Xenopus tropicalis (Western clawed frog).